The chain runs to 176 residues: Peptide deformylase (176 aa).

Fe cation is bound by residues Cys95 and His137. The active site involves Glu138. Position 141 (His141) interacts with Fe cation.

This sequence belongs to the polypeptide deformylase family. Requires Fe(2+) as cofactor.

The catalysed reaction is N-terminal N-formyl-L-methionyl-[peptide] + H2O = N-terminal L-methionyl-[peptide] + formate. Its function is as follows. Removes the formyl group from the N-terminal Met of newly synthesized proteins. Requires at least a dipeptide for an efficient rate of reaction. N-terminal L-methionine is a prerequisite for activity but the enzyme has broad specificity at other positions. The sequence is that of Peptide deformylase from Hyphomonas neptunium (strain ATCC 15444).